Consider the following 969-residue polypeptide: Translation initiation factor IF-2 (969 aa).

Residues 49 to 63 show a composition bias toward basic and acidic residues; sequence HLRKSHGATDGDKRK. Disordered stretches follow at residues 49–85, 100–128, and 143–380; these read HLRK…KART, DDVS…REEE, and LRER…SFQA. Residues 105–114 show a composition bias toward low complexity; the sequence is VAEQGQAQVA. A compositionally biased stretch (basic and acidic residues) spans 143 to 181; the sequence is LRERQERLEREEAERRAREEAAEAERRRAEEEAAAKRAA. The span at 182 to 206 shows a compositional bias: low complexity; the sequence is AEAAAAQQAAQQAAAAQQAAAPADS. Positions 209 to 260 are enriched in basic and acidic residues; it reads DEARAAAERAAQREAAKKAEDAAREAAEKARAEQEEIRKRREAAEAEARAIR. Low complexity predominate over residues 301–323; sequence AQARPAAKKPAAAPAATPAPAGA. Gly residues predominate over residues 353-366; it reads SSGGVDRGWRGGPK. Residues 469 to 638 form the tr-type G domain; it reads PRPPVVTVMG…LLQAEVLELK (170 aa). Residues 478–485 form a G1 region; the sequence is GHVDHGKT. 478-485 is a GTP binding site; the sequence is GHVDHGKT. The G2 stretch occupies residues 503 to 507; sequence GITQH. Residues 524-527 are G3; it reads DTPG. GTP-binding positions include 524 to 528 and 578 to 581; these read DTPGH and NKID. The tract at residues 578–581 is G4; that stretch reads NKID. The segment at 614–616 is G5; that stretch reads SAK.

The protein belongs to the TRAFAC class translation factor GTPase superfamily. Classic translation factor GTPase family. IF-2 subfamily.

It is found in the cytoplasm. In terms of biological role, one of the essential components for the initiation of protein synthesis. Protects formylmethionyl-tRNA from spontaneous hydrolysis and promotes its binding to the 30S ribosomal subunits. Also involved in the hydrolysis of GTP during the formation of the 70S ribosomal complex. In Burkholderia multivorans (strain ATCC 17616 / 249), this protein is Translation initiation factor IF-2.